A 247-amino-acid polypeptide reads, in one-letter code: Adenosylcobinamide-GDP ribazoletransferase (247 aa).

A run of 5 helical transmembrane segments spans residues 1–21 (MLRL…PFSF), 37–57 (LVGL…ALAL), 61–81 (VADL…HLDG), 109–129 (AVGV…LFAV), and 176–196 (VAVA…LPGI).

The protein belongs to the CobS family. The cofactor is Mg(2+).

It localises to the cell inner membrane. The enzyme catalyses alpha-ribazole + adenosylcob(III)inamide-GDP = adenosylcob(III)alamin + GMP + H(+). The catalysed reaction is alpha-ribazole 5'-phosphate + adenosylcob(III)inamide-GDP = adenosylcob(III)alamin 5'-phosphate + GMP + H(+). The protein operates within cofactor biosynthesis; adenosylcobalamin biosynthesis; adenosylcobalamin from cob(II)yrinate a,c-diamide: step 7/7. Its function is as follows. Joins adenosylcobinamide-GDP and alpha-ribazole to generate adenosylcobalamin (Ado-cobalamin). Also synthesizes adenosylcobalamin 5'-phosphate from adenosylcobinamide-GDP and alpha-ribazole 5'-phosphate. The sequence is that of Adenosylcobinamide-GDP ribazoletransferase from Geotalea daltonii (strain DSM 22248 / JCM 15807 / FRC-32) (Geobacter daltonii).